Reading from the N-terminus, the 577-residue chain is General transcription factor IIF subunit 1 (577 aa).

The interval 1-36 is disordered; it reads MSSASKSTPSAASGSSTSAAAAAAASVASGSASSSA. A phosphoserine mark is found at Ser183, Ser246, Ser250, and Ser252. The tract at residues 236–508 is disordered; the sequence is KITDMDEWID…TSLPTSFSGG (273 aa). Residues 240-256 show a composition bias toward acidic residues; the sequence is MDEWIDSEDESDSEDEE. Basic and acidic residues predominate over residues 257-271; the sequence is DKKKKEQEDSDDGKA. Basic residues predominate over residues 272-285; that stretch reads KGKGKKGADKKKKK. The span at 289–304 shows a compositional bias: acidic residues; that stretch reads DDEAFEESDDGDEEGR. Positions 319–341 are enriched in basic and acidic residues; it reads PEAKVDKDMKGVAEEDALRKLLT. At Thr341 the chain carries Phosphothreonine. Residues Ser342, Ser352, and Ser355 each carry the phosphoserine modification. A compositionally biased stretch (basic and acidic residues) spans 362 to 376; that stretch reads GEKKKKDKGKDEVSK. Over residues 392–406 the composition is skewed to low complexity; it reads SNGSGDSSTDFSSDS. Residues 423–437 show a composition bias toward basic and acidic residues; it reads VVKDKDKEKEKEKES. Low complexity predominate over residues 438-456; that stretch reads AASSKVIASSSNANKSRSA. Phosphoserine is present on residues Ser453 and Ser455. Thr457 carries the phosphothreonine modification. Polar residues-rich tracts occupy residues 471 to 489 and 496 to 506; these read SLPS…TSTP and EISTSLPTSFS. 2 positions are modified to phosphoserine: Ser482 and Ser484. Thr488 bears the Phosphothreonine mark.

Belongs to the TFIIF alpha subunit family. Heterodimer of an alpha and a beta subunit. In terms of processing, phosphorylated on Ser and other residues by TAF1 and casein kinase II-like kinases.

It is found in the nucleus. In terms of biological role, TFIIF is a general transcription initiation factor that binds to RNA polymerase II and helps to recruit it to the initiation complex in collaboration with TFIIB. It promotes transcription elongation. This is General transcription factor IIF subunit 1 from Drosophila melanogaster (Fruit fly).